The primary structure comprises 657 residues: Outer dense fiber protein 2 (657 aa).

Residues Ser73 and Ser74 each carry the phosphoserine modification. Thr92 is modified (phosphothreonine). Ser95 carries the phosphoserine; by TSSK4 modification. Ser106 and Ser109 each carry phosphoserine. Thr110 carries the post-translational modification Phosphothreonine. 2 positions are modified to phosphoserine: Ser115 and Ser129. Lys138 is covalently cross-linked (Glycyl lysine isopeptide (Lys-Gly) (interchain with G-Cter in SUMO2)). Ser139 is subject to Phosphoserine. 2 coiled-coil regions span residues 144 to 423 and 461 to 635; these read QKGE…AEQL and EIIV…SDLR. Thr231 is modified (phosphothreonine). Ser261 and Ser632 each carry phosphoserine.

The protein belongs to the ODF2 family. In terms of assembly, self-associates. Associates with microtubules and forms a fibrillar structure partially linked to the microtubule network. Interacts via its C-terminus with PLK1. Interacts with ODF1. Interacts with MARK4; the interaction is required for localization of ODF2 to centrioles. Interacts with TSSK4. Interacts with AKNA. Interacts with CFAP58. Interacts with BBOF1. Interacts with CCDC38. Interacts with CCDC42. In terms of processing, tyrosine phosphorylated. Phosphorylated on Ser-95 by TSSK4.

It is found in the cytoplasm. The protein localises to the cytoskeleton. The protein resides in the microtubule organizing center. It localises to the centrosome. Its subcellular location is the cell projection. It is found in the cilium. The protein localises to the centriole. The protein resides in the spindle pole. It localises to the flagellum. Seems to be a major component of sperm tail outer dense fibers (ODF). ODFs are filamentous structures located on the outside of the axoneme in the midpiece and principal piece of the mammalian sperm tail and may help to maintain the passive elastic structures and elastic recoil of the sperm tail. May have a modulating influence on sperm motility. Functions as a general scaffold protein that is specifically localized at the distal/subdistal appendages of mother centrioles. Component of the centrosome matrix required for the localization of PLK1 and NIN to the centrosomes. Required for the formation and/or maintenance of normal CETN1 assembly. This Bos taurus (Bovine) protein is Outer dense fiber protein 2 (ODF2).